The sequence spans 529 residues: Membrane-bound lytic murein transglycosylase F (529 aa).

Residues 1 to 27 (MPIFNLHQLRNFLFIIATTLFLSACQI) form the signal peptide. The non-LT domain stretch occupies residues 28–287 (ESKPTSELDQ…RLEEKYIGHI (260 aa)). The interval 288 to 529 (GSFDYVDTRA…QATLTTEVQP (242 aa)) is LT domain. E332 is an active-site residue. The interval 510 to 529 (EALSPDVGVSQATLTTEVQP) is disordered. A compositionally biased stretch (polar residues) spans 519–529 (SQATLTTEVQP).

This sequence in the N-terminal section; belongs to the bacterial solute-binding protein 3 family. In the C-terminal section; belongs to the transglycosylase Slt family.

The protein localises to the cell outer membrane. The enzyme catalyses Exolytic cleavage of the (1-&gt;4)-beta-glycosidic linkage between N-acetylmuramic acid (MurNAc) and N-acetylglucosamine (GlcNAc) residues in peptidoglycan, from either the reducing or the non-reducing ends of the peptidoglycan chains, with concomitant formation of a 1,6-anhydrobond in the MurNAc residue.. Its function is as follows. Murein-degrading enzyme that degrades murein glycan strands and insoluble, high-molecular weight murein sacculi, with the concomitant formation of a 1,6-anhydromuramoyl product. Lytic transglycosylases (LTs) play an integral role in the metabolism of the peptidoglycan (PG) sacculus. Their lytic action creates space within the PG sacculus to allow for its expansion as well as for the insertion of various structures such as secretion systems and flagella. In Vibrio vulnificus (strain CMCP6), this protein is Membrane-bound lytic murein transglycosylase F.